A 447-amino-acid chain; its full sequence is Na(+)-translocating NADH-quinone reductase subunit A (447 aa).

The protein belongs to the NqrA family. Composed of six subunits; NqrA, NqrB, NqrC, NqrD, NqrE and NqrF.

It carries out the reaction a ubiquinone + n Na(+)(in) + NADH + H(+) = a ubiquinol + n Na(+)(out) + NAD(+). Its function is as follows. NQR complex catalyzes the reduction of ubiquinone-1 to ubiquinol by two successive reactions, coupled with the transport of Na(+) ions from the cytoplasm to the periplasm. NqrA to NqrE are probably involved in the second step, the conversion of ubisemiquinone to ubiquinol. The protein is Na(+)-translocating NADH-quinone reductase subunit A of Cellvibrio japonicus (strain Ueda107) (Pseudomonas fluorescens subsp. cellulosa).